The primary structure comprises 106 residues: UPF0060 membrane protein Mrad2831_0929 (106 aa).

The next 4 helical transmembrane spans lie at 3-23 (LLAY…FWAW), 30-50 (AWWT…LTLV), 59-79 (FAAY…LAEG), and 87-104 (LAGS…LLGR).

This sequence belongs to the UPF0060 family.

It is found in the cell inner membrane. In Methylobacterium radiotolerans (strain ATCC 27329 / DSM 1819 / JCM 2831 / NBRC 15690 / NCIMB 10815 / 0-1), this protein is UPF0060 membrane protein Mrad2831_0929.